The following is a 359-amino-acid chain: Glycerol-3-phosphate dehydrogenase [NAD(P)+] (359 aa).

Positions 11, 12, 32, and 107 each coordinate NADPH. 2 residues coordinate sn-glycerol 3-phosphate: Lys-107 and Gly-138. Residue Ala-142 coordinates NADPH. Lys-193, Asp-246, Ser-256, Arg-257, and Asn-258 together coordinate sn-glycerol 3-phosphate. Lys-193 functions as the Proton acceptor in the catalytic mechanism. An NADPH-binding site is contributed by Arg-257. Residues Val-281 and Glu-283 each coordinate NADPH.

This sequence belongs to the NAD-dependent glycerol-3-phosphate dehydrogenase family.

Its subcellular location is the cytoplasm. It catalyses the reaction sn-glycerol 3-phosphate + NAD(+) = dihydroxyacetone phosphate + NADH + H(+). The enzyme catalyses sn-glycerol 3-phosphate + NADP(+) = dihydroxyacetone phosphate + NADPH + H(+). It functions in the pathway membrane lipid metabolism; glycerophospholipid metabolism. Functionally, catalyzes the reduction of the glycolytic intermediate dihydroxyacetone phosphate (DHAP) to sn-glycerol 3-phosphate (G3P), the key precursor for phospholipid synthesis. This is Glycerol-3-phosphate dehydrogenase [NAD(P)+] from Dehalococcoides mccartyi (strain ATCC BAA-2266 / KCTC 15142 / 195) (Dehalococcoides ethenogenes (strain 195)).